Consider the following 75-residue polypeptide: UPF0291 protein Teth39_0326 (75 aa).

The protein belongs to the UPF0291 family.

It is found in the cytoplasm. The sequence is that of UPF0291 protein Teth39_0326 from Thermoanaerobacter pseudethanolicus (strain ATCC 33223 / 39E) (Clostridium thermohydrosulfuricum).